The sequence spans 129 residues: MKIEKMNFYSPKKYKWKGIKITEQAIEQILFLINKNPKNKGIRIGTKKSGCAGFRYTMELVKNNTIEKENKNDIVFYYNNILVYISLKEAPFLNGIKIDFVKDSINEVFKYCNPRIKTFCGCGESFSID.

The protein belongs to the HesB/IscA family.

This is an uncharacterized protein from Buchnera aphidicola subsp. Schizaphis graminum (strain Sg).